The chain runs to 299 residues: tRNA dimethylallyltransferase (299 aa).

10–17 (GPTAVGKT) provides a ligand contact to ATP. 12 to 17 (TAVGKT) lines the substrate pocket. Residues 35–38 (DSQQ) are interaction with substrate tRNA.

The protein belongs to the IPP transferase family. As to quaternary structure, monomer. It depends on Mg(2+) as a cofactor.

It catalyses the reaction adenosine(37) in tRNA + dimethylallyl diphosphate = N(6)-dimethylallyladenosine(37) in tRNA + diphosphate. In terms of biological role, catalyzes the transfer of a dimethylallyl group onto the adenine at position 37 in tRNAs that read codons beginning with uridine, leading to the formation of N6-(dimethylallyl)adenosine (i(6)A). The chain is tRNA dimethylallyltransferase from Streptococcus thermophilus (strain ATCC BAA-491 / LMD-9).